Consider the following 504-residue polypeptide: Tegument protein VP16 homolog (504 aa).

3 disordered regions span residues 354 to 381 (EAGGGWRRSGSTRTRGRAARSTTGRLQR), 395 to 421 (ATPRQRLRARGEPRHTSGSGAFSQGRR), and 435 to 486 (RSGP…ANPF). The segment covering 361-378 (RSGSTRTRGRAARSTTGR) has biased composition (low complexity). Residues 447–460 (PVRSGLGLSRARGS) show a composition bias toward low complexity.

The protein belongs to the herpesviridae tegument protein VP16 protein family. In terms of assembly, associates with the VP16-induced complex; binding to host HCFC1 activates VP16 for association with the octamer motif-binding host protein POU2F1, to form a multiprotein-DNA complex responsible for activating transcription of the viral immediate early genes.

It localises to the virion tegument. The protein localises to the host nucleus. In terms of biological role, transcriptional activator of immediate-early (IE) gene products (alpha genes). Acts as a key activator of lytic infection by initiating the lytic program through the assembly of the transcriptional regulatory VP16-induced complex composed of VP16 and two cellular factors, HCFC1 and POU2F1. VP16-induced complex represents a regulatory switch: when it is on, it promotes IE-gene expression and thus lytic infection, and when it is off, it limits IE-gene transcription favoring latent infection. Its function is as follows. May play a role in the aggregation of tegument proteins around nucleocapsids during virus morphogenesis. The chain is Tegument protein VP16 homolog from Bos taurus (Bovine).